A 90-amino-acid polypeptide reads, in one-letter code: Small ribosomal subunit protein bS18 (90 aa).

Belongs to the bacterial ribosomal protein bS18 family. In terms of assembly, part of the 30S ribosomal subunit. Forms a tight heterodimer with protein bS6.

Functionally, binds as a heterodimer with protein bS6 to the central domain of the 16S rRNA, where it helps stabilize the platform of the 30S subunit. This chain is Small ribosomal subunit protein bS18, found in Bordetella avium (strain 197N).